A 705-amino-acid chain; its full sequence is 3-hydroxypropionate--CoA ligase [ADP-forming] (705 aa).

The ATP-grasp domain occupies 25–61; the sequence is KSILKNYGVKVPPYALVTSAEEAAKEAKKIGFPLVMK. 51-61 contacts ATP; that stretch reads AKKIGFPLVMK.

The protein in the N-terminal section; belongs to the acetate CoA ligase beta subunit family. This sequence in the C-terminal section; belongs to the acetate CoA ligase alpha subunit family. The cofactor is Mg(2+). It depends on Mn(2+) as a cofactor.

The catalysed reaction is 3-hydroxypropanoate + ATP + CoA = 3-hydroxypropanoyl-CoA + ADP + phosphate. In terms of biological role, involved in thaumarchaeal hydroxypropionate/hydroxybutyrate (HP/HB) cycle, a modified version of the autotrophic HP/HB cycle of Crenarchaeota. Catalyzes the formation of 3-hydroxypropionyl-CoA, ADP and phosphate from 3-hydroxypropionate, coenzyme A (CoA) and ATP. Can also use 4-hydroxybutyrate, propionate and butyrate, with poor catalytic efficiency. This Nitrosopumilus maritimus (strain SCM1) protein is 3-hydroxypropionate--CoA ligase [ADP-forming].